Here is a 280-residue protein sequence, read N- to C-terminus: Bifunctional protein FolD (280 aa).

NADP(+) is bound by residues 158-160 (GES), I183, and I222.

Belongs to the tetrahydrofolate dehydrogenase/cyclohydrolase family. As to quaternary structure, homodimer.

The enzyme catalyses (6R)-5,10-methylene-5,6,7,8-tetrahydrofolate + NADP(+) = (6R)-5,10-methenyltetrahydrofolate + NADPH. It catalyses the reaction (6R)-5,10-methenyltetrahydrofolate + H2O = (6R)-10-formyltetrahydrofolate + H(+). The protein operates within one-carbon metabolism; tetrahydrofolate interconversion. Catalyzes the oxidation of 5,10-methylenetetrahydrofolate to 5,10-methenyltetrahydrofolate and then the hydrolysis of 5,10-methenyltetrahydrofolate to 10-formyltetrahydrofolate. In Mycoplasma mobile (strain ATCC 43663 / 163K / NCTC 11711) (Mesomycoplasma mobile), this protein is Bifunctional protein FolD.